A 247-amino-acid polypeptide reads, in one-letter code: Adenosine 5'-phosphosulfate reductase (247 aa).

The [4Fe-4S] cluster site is built by C133, C134, C216, and C219. Residues 222-247 are disordered; that stretch reads KPAPGSDPRSGRWAGQAKTECGLHAS. The Nucleophile; cysteine thiosulfonate intermediate role is filled by C242.

This sequence belongs to the PAPS reductase family. CysH subfamily. It depends on [4Fe-4S] cluster as a cofactor.

The protein resides in the cytoplasm. It carries out the reaction [thioredoxin]-disulfide + sulfite + AMP + 2 H(+) = adenosine 5'-phosphosulfate + [thioredoxin]-dithiol. The protein operates within sulfur metabolism; hydrogen sulfide biosynthesis; sulfite from sulfate. Its function is as follows. Catalyzes the formation of sulfite from adenosine 5'-phosphosulfate (APS) using thioredoxin as an electron donor. This Rhodococcus opacus (strain B4) protein is Adenosine 5'-phosphosulfate reductase.